Consider the following 537-residue polypeptide: Arginine--tRNA ligase (537 aa).

Residues 113-123 carry the 'HIGH' region motif; it reads ANPTGRIHLGH.

This sequence belongs to the class-I aminoacyl-tRNA synthetase family. As to quaternary structure, monomer.

It localises to the cytoplasm. The catalysed reaction is tRNA(Arg) + L-arginine + ATP = L-arginyl-tRNA(Arg) + AMP + diphosphate. This chain is Arginine--tRNA ligase (argS), found in Mycoplasma genitalium (strain ATCC 33530 / DSM 19775 / NCTC 10195 / G37) (Mycoplasmoides genitalium).